Consider the following 435-residue polypeptide: ATP-dependent protease ATPase subunit HslU (435 aa).

Residues Ile-18, 60-65 (GVGKTE), Asp-248, Glu-313, and Arg-385 each bind ATP.

Belongs to the ClpX chaperone family. HslU subfamily. In terms of assembly, a double ring-shaped homohexamer of HslV is capped on each side by a ring-shaped HslU homohexamer. The assembly of the HslU/HslV complex is dependent on binding of ATP.

The protein localises to the cytoplasm. Functionally, ATPase subunit of a proteasome-like degradation complex; this subunit has chaperone activity. The binding of ATP and its subsequent hydrolysis by HslU are essential for unfolding of protein substrates subsequently hydrolyzed by HslV. HslU recognizes the N-terminal part of its protein substrates and unfolds these before they are guided to HslV for hydrolysis. This is ATP-dependent protease ATPase subunit HslU from Allorhizobium ampelinum (strain ATCC BAA-846 / DSM 112012 / S4) (Agrobacterium vitis (strain S4)).